A 568-amino-acid chain; its full sequence is Urease subunit alpha (568 aa).

The 440-residue stretch at 129–568 (GAIDSHIHFI…LPMAQRYFLF (440 aa)) folds into the Urease domain. H134, H136, and K217 together coordinate Ni(2+). Position 217 is an N6-carboxylysine (K217). Residue H219 participates in substrate binding. Residues H246 and H272 each coordinate Ni(2+). The Proton donor role is filled by H320. D360 contacts Ni(2+).

It belongs to the metallo-dependent hydrolases superfamily. Urease alpha subunit family. As to quaternary structure, heterotrimer of UreA (gamma), UreB (beta) and UreC (alpha) subunits. Three heterotrimers associate to form the active enzyme. Ni cation is required as a cofactor. Post-translationally, carboxylation allows a single lysine to coordinate two nickel ions.

It is found in the cytoplasm. It carries out the reaction urea + 2 H2O + H(+) = hydrogencarbonate + 2 NH4(+). The protein operates within nitrogen metabolism; urea degradation; CO(2) and NH(3) from urea (urease route): step 1/1. The protein is Urease subunit alpha of Saccharophagus degradans (strain 2-40 / ATCC 43961 / DSM 17024).